A 288-amino-acid chain; its full sequence is Acetyl-coenzyme A carboxylase carboxyl transferase subunit beta (288 aa).

The CoA carboxyltransferase N-terminal domain occupies 34 to 288; sequence LFAKCPGCKQ…TLLSFHGGVQ (255 aa). Residues Cys-38, Cys-41, Cys-56, and Cys-59 each contribute to the Zn(2+) site. Residues 38–59 form a C4-type zinc finger; the sequence is CPGCKQAIYQKDLGQAKICPNC.

This sequence belongs to the AccD/PCCB family. In terms of assembly, acetyl-CoA carboxylase is a heterohexamer composed of biotin carboxyl carrier protein (AccB), biotin carboxylase (AccC) and two subunits each of ACCase subunit alpha (AccA) and ACCase subunit beta (AccD). Zn(2+) is required as a cofactor.

Its subcellular location is the cytoplasm. The enzyme catalyses N(6)-carboxybiotinyl-L-lysyl-[protein] + acetyl-CoA = N(6)-biotinyl-L-lysyl-[protein] + malonyl-CoA. It functions in the pathway lipid metabolism; malonyl-CoA biosynthesis; malonyl-CoA from acetyl-CoA: step 1/1. Its function is as follows. Component of the acetyl coenzyme A carboxylase (ACC) complex. Biotin carboxylase (BC) catalyzes the carboxylation of biotin on its carrier protein (BCCP) and then the CO(2) group is transferred by the transcarboxylase to acetyl-CoA to form malonyl-CoA. In Streptococcus thermophilus (strain CNRZ 1066), this protein is Acetyl-coenzyme A carboxylase carboxyl transferase subunit beta.